The sequence spans 167 residues: Aphrodisin (167 aa).

The first 16 residues, 1–16, serve as a signal peptide directing secretion; sequence MVKILLLALVFSLAHA. At Gln-17 the chain carries Pyrrolidone carboxylic acid. Cystine bridges form between Cys-54–Cys-58 and Cys-73–Cys-165. N-linked (GlcNAc...) asparagine glycans are attached at residues Asn-57 and Asn-85.

The protein belongs to the calycin superfamily. Lipocalin family. In terms of tissue distribution, expressed in the vagina, uterus, and Bartholin's glands of female hamsters. Secreted in vaginal discharge.

The protein resides in the secreted. Functionally, acts as an aphrodisiac pheromone, reliably eliciting copulatory behavior from male hamster. This chain is Aphrodisin, found in Cricetus cricetus (Black-bellied hamster).